Consider the following 139-residue polypeptide: Transcription antitermination protein NusB (139 aa).

Belongs to the NusB family.

Functionally, involved in transcription antitermination. Required for transcription of ribosomal RNA (rRNA) genes. Binds specifically to the boxA antiterminator sequence of the ribosomal RNA (rrn) operons. The sequence is that of Transcription antitermination protein NusB from Salmonella agona (strain SL483).